Here is a 279-residue protein sequence, read N- to C-terminus: Odontogenic ameloblast-associated protein (279 aa).

The N-terminal stretch at 1–15 (MKIIILLGFLGATLS) is a signal peptide. Positions 100-123 (AQGAQAGQVDPSQAQTPPQTQPGP) are enriched in low complexity. The tract at residues 100 to 125 (AQGAQAGQVDPSQAQTPPQTQPGPNH) is disordered. Thr115 and Thr119 each carry an O-linked (GalNAc...) threonine glycan. The segment at 127-129 (MPY) is interaction with ARHGEF5. O-linked (GalNAc...) threonine glycosylation is found at Thr168, Thr244, Thr250, Thr251, Thr255, and Thr273.

This sequence belongs to the ODAM family. In terms of assembly, interacts (via C-terminus) with ARHGEF5. In terms of processing, O-glycosylated.

The protein resides in the secreted. It is found in the cytoplasm. It localises to the nucleus. Functionally, tooth-associated epithelia protein that probably plays a role in odontogenesis, the complex process that results in the initiation and generation of the tooth. May be incorporated in the enamel matrix at the end of mineralization process. Involved in the induction of RHOA activity via interaction with ARHGEF and expression of downstream factors such as ROCK. Plays a role in attachment of the junctional epithelium to the tooth surface. The chain is Odontogenic ameloblast-associated protein (ODAM) from Macaca mulatta (Rhesus macaque).